Reading from the N-terminus, the 571-residue chain is Phosphoenolpyruvate-protein phosphotransferase (571 aa).

H203 acts as the Tele-phosphohistidine intermediate in catalysis. 2 residues coordinate phosphoenolpyruvate: R306 and R342. 2 residues coordinate Mg(2+): E429 and D453. Residues N452 to D453 and R463 contribute to the phosphoenolpyruvate site. C500 functions as the Proton donor in the catalytic mechanism.

The protein belongs to the PEP-utilizing enzyme family. In terms of assembly, homodimer. The cofactor is Mg(2+).

The protein resides in the cytoplasm. The catalysed reaction is L-histidyl-[protein] + phosphoenolpyruvate = N(pros)-phospho-L-histidyl-[protein] + pyruvate. General (non sugar-specific) component of the phosphoenolpyruvate-dependent sugar phosphotransferase system (sugar PTS). This major carbohydrate active-transport system catalyzes the phosphorylation of incoming sugar substrates concomitantly with their translocation across the cell membrane. Enzyme I transfers the phosphoryl group from phosphoenolpyruvate (PEP) to the phosphoryl carrier protein (HPr). This Chlamydia pneumoniae (Chlamydophila pneumoniae) protein is Phosphoenolpyruvate-protein phosphotransferase (ptsI).